The following is a 356-amino-acid chain: Cyanide hydratase (356 aa).

The 276-residue stretch at 15–290 (FKVAAVQAEP…EVVLYANISL (276 aa)) folds into the CN hydrolase domain. Glu-55 serves as the catalytic Proton acceptor. Residue Lys-137 is part of the active site. Catalysis depends on Cys-172, which acts as the Nucleophile. The tract at residues 331-356 (DEQAASKAQQAEIDNAGKGSIVPSKL) is disordered.

The protein belongs to the carbon-nitrogen hydrolase superfamily. Nitrilase family.

It carries out the reaction formamide = hydrogen cyanide + H2O. Its function is as follows. Catalyzes the hydration of cyanide to formamide. Degradation of cyanide may be important for plant pathogenic fungi in infection of cyanogenic plants. The polypeptide is Cyanide hydratase (Armillaria gallica (Bulbous honey fungus)).